Reading from the N-terminus, the 421-residue chain is Mitochondrial distribution and morphology protein 10 (421 aa).

This sequence belongs to the MDM10 family. In terms of assembly, component of the ER-mitochondria encounter structure (ERMES) or MDM complex, composed of MMM1, MDM10, MDM12 and MDM34. Associates with the mitochondrial outer membrane sorting assembly machinery SAM(core) complex.

It is found in the mitochondrion outer membrane. Its function is as follows. Component of the ERMES/MDM complex, which serves as a molecular tether to connect the endoplasmic reticulum and mitochondria. Components of this complex are involved in the control of mitochondrial shape and protein biogenesis and may function in phospholipid exchange. MDM10 is involved in the late assembly steps of the general translocase of the mitochondrial outer membrane (TOM complex). Functions in the TOM40-specific route of the assembly of outer membrane beta-barrel proteins, including the association of TOM40 with the receptor TOM22 and small TOM proteins. Can associate with the SAM(core) complex as well as the MDM12-MMM1 complex, both involved in late steps of the major beta-barrel assembly pathway, that is responsible for biogenesis of all outer membrane beta-barrel proteins. May act as a switch that shuttles between both complexes and channels precursor proteins into the TOM40-specific pathway. Plays a role in mitochondrial morphology and in the inheritance of mitochondria. In Vanderwaltozyma polyspora (strain ATCC 22028 / DSM 70294 / BCRC 21397 / CBS 2163 / NBRC 10782 / NRRL Y-8283 / UCD 57-17) (Kluyveromyces polysporus), this protein is Mitochondrial distribution and morphology protein 10.